The chain runs to 172 residues: Ribosome maturation factor RimM (172 aa).

Positions 96–168 constitute a PRC barrel domain; the sequence is EGEFYYHQII…RVDVELMEGL (73 aa).

It belongs to the RimM family. Binds ribosomal protein uS19.

The protein localises to the cytoplasm. Functionally, an accessory protein needed during the final step in the assembly of 30S ribosomal subunit, possibly for assembly of the head region. Essential for efficient processing of 16S rRNA. May be needed both before and after RbfA during the maturation of 16S rRNA. It has affinity for free ribosomal 30S subunits but not for 70S ribosomes. This Streptococcus pyogenes serotype M18 (strain MGAS8232) protein is Ribosome maturation factor RimM.